The following is a 326-amino-acid chain: Beta-ketoacyl-[acyl-carrier-protein] synthase III (326 aa).

Residues Cys-112 and His-251 contribute to the active site. The interval 252–256 (QANSR) is ACP-binding. Residue Asn-281 is part of the active site.

Belongs to the thiolase-like superfamily. FabH family. Homodimer.

It is found in the cytoplasm. It carries out the reaction malonyl-[ACP] + acetyl-CoA + H(+) = 3-oxobutanoyl-[ACP] + CO2 + CoA. It participates in lipid metabolism; fatty acid biosynthesis. Its function is as follows. Catalyzes the condensation reaction of fatty acid synthesis by the addition to an acyl acceptor of two carbons from malonyl-ACP. Catalyzes the first condensation reaction which initiates fatty acid synthesis and may therefore play a role in governing the total rate of fatty acid production. Possesses both acetoacetyl-ACP synthase and acetyl transacylase activities. Its substrate specificity determines the biosynthesis of branched-chain and/or straight-chain of fatty acids. The sequence is that of Beta-ketoacyl-[acyl-carrier-protein] synthase III from Clostridium botulinum (strain Kyoto / Type A2).